A 186-amino-acid chain; its full sequence is Interferon beta-2 (186 aa).

An N-terminal signal peptide occupies residues 1–21 (MTHRCLLQMVLLLCFSTTALS). Residues C52 and C161 are joined by a disulfide bond. N-linked (GlcNAc...) asparagine glycans are attached at residues N131 and N173.

Belongs to the alpha/beta interferon family. As to quaternary structure, monomer.

The protein localises to the secreted. Its function is as follows. Has antiviral, antibacterial and anticancer activities. The chain is Interferon beta-2 (IFNB2) from Bos taurus (Bovine).